Reading from the N-terminus, the 321-residue chain is Nodulation protein D 1 (321 aa).

In terms of domain architecture, HTH lysR-type spans 6–63 (LDLNLLVALDALMTERKLTAAARSINLSQPAMSAAITRLRTYFRDELFTMNGRELVPT). A DNA-binding region (H-T-H motif) is located at residues 23–42 (LTAAARSINLSQPAMSAAIT).

The protein belongs to the LysR transcriptional regulatory family.

NodD regulates the expression of the nodABCFE genes which encode other nodulation proteins. NodD is also a negative regulator of its own expression. Binds flavonoids as inducers. This chain is Nodulation protein D 1 (nodD1), found in Bradyrhizobium japonicum.